The chain runs to 271 residues: Methylcorrinoid:tetrahydrofolate methyltransferase (271 aa).

One can recognise a Pterin-binding domain in the interval 1–247 (MIIIGEKLNG…GAIFATDALL (247 aa)).

It belongs to the vitamin-B12 dependent methionine synthase family. As to quaternary structure, the proline betaine:THF methyl transfer system is composed of two methyltransferases, MtpB and MtqA, and the corrinoid protein MtqC. The L-carnitine:THF methyl transfer system is composed of two methyltransferases, MtcB and MtqA, and the corrinoid protein MtqC.

It catalyses the reaction methyl-Co(III)-[quaternary-amine-specific corrinoid protein] + (6S)-5,6,7,8-tetrahydrofolate = Co(I)-[quaternary-amine-specific corrinoid protein] + (6S)-5-methyl-5,6,7,8-tetrahydrofolate + H(+). Involved in the degradation of the quaternary amines L-proline betaine and L-carnitine. Component of a corrinoid-dependent methyltransferase system that transfers a methyl group from L-proline betaine or L-carnitine to tetrahydrofolate (THF), forming methyl-THF, a key intermediate in the Wood-Ljungdahl acetogenesis pathway. MtqA catalyzes the transfer of a methyl group from the methylated corrinoid protein MtqC to THF, forming methyl-THF. This is Methylcorrinoid:tetrahydrofolate methyltransferase from Eubacterium limosum.